A 197-amino-acid chain; its full sequence is Recombination protein RecR (197 aa).

The C4-type zinc finger occupies 56–71; the sequence is CKRCGSYAETEICNIC. One can recognise a Toprim domain in the interval 79-174; sequence HTFCVVEQPE…DVTRIAYGIT (96 aa).

It belongs to the RecR family.

In terms of biological role, may play a role in DNA repair. It seems to be involved in an RecBC-independent recombinational process of DNA repair. It may act with RecF and RecO. This Leptospira borgpetersenii serovar Hardjo-bovis (strain JB197) protein is Recombination protein RecR.